Reading from the N-terminus, the 282-residue chain is Bifunctional protein FolD (282 aa).

Residues 165–167 (GRS), Ser-190, and Thr-231 each bind NADP(+).

This sequence belongs to the tetrahydrofolate dehydrogenase/cyclohydrolase family. As to quaternary structure, homodimer.

It carries out the reaction (6R)-5,10-methylene-5,6,7,8-tetrahydrofolate + NADP(+) = (6R)-5,10-methenyltetrahydrofolate + NADPH. The enzyme catalyses (6R)-5,10-methenyltetrahydrofolate + H2O = (6R)-10-formyltetrahydrofolate + H(+). It functions in the pathway one-carbon metabolism; tetrahydrofolate interconversion. Catalyzes the oxidation of 5,10-methylenetetrahydrofolate to 5,10-methenyltetrahydrofolate and then the hydrolysis of 5,10-methenyltetrahydrofolate to 10-formyltetrahydrofolate. This Clostridium beijerinckii (strain ATCC 51743 / NCIMB 8052) (Clostridium acetobutylicum) protein is Bifunctional protein FolD.